The following is a 215-amino-acid chain: Interleukin-12 subunit alpha (215 aa).

Positions 1–22 (MCSSRCLLFLATLAFLIHLSLA) are cleaved as a signal peptide. 3 disulfides stabilise this stretch: C33–C106, C60–C192, and C81–C119. A glycan (N-linked (GlcNAc...) asparagine) is linked at N89.

This sequence belongs to the IL-6 superfamily. As to quaternary structure, heterodimer with IL12B; disulfide-linked. This heterodimer is known as interleukin IL-12. Heterodimer with EBI3/IL27B; not disulfide-linked. This heterodimer is known as interleukin IL-35. Interacts with NBR1; this interaction promotes IL-12 secretion.

The protein localises to the secreted. Functionally, heterodimerizes with IL12B to form the IL-12 cytokine or with EBI3/IL27B to form the IL-35 cytokine. IL-12 is primarily produced by professional antigen-presenting cells (APCs) such as B-cells and dendritic cells (DCs) as well as macrophages and granulocytes and regulates T-cell and natural killer-cell responses, induces the production of interferon-gamma (IFN-gamma), favors the differentiation of T-helper 1 (Th1) cells and is an important link between innate resistance and adaptive immunity. Mechanistically, exerts its biological effects through a receptor composed of IL12R1 and IL12R2 subunits. Binding to the receptor results in the rapid tyrosine phosphorylation of a number of cellular substrates including the JAK family kinases TYK2 and JAK2. In turn, recruited STAT4 gets phosphorylated and translocates to the nucleus where it regulates cytokine/growth factor responsive genes. As part of IL-35, plays essential roles in maintaining the immune homeostasis of the liver microenvironment and also functions as an immune-suppressive cytokine. Mediates biological events through unconventional receptors composed of IL12RB2 and gp130/IL6ST heterodimers or homodimers. Signaling requires the transcription factors STAT1 and STAT4, which form a unique heterodimer that binds to distinct DNA sites. The chain is Interleukin-12 subunit alpha (IL12A) from Sigmodon hispidus (Hispid cotton rat).